The chain runs to 111 residues: Probable 4-amino-4-deoxy-L-arabinose-phosphoundecaprenol flippase subunit ArnE (111 aa).

Transmembrane regions (helical) follow at residues 36 to 56, 61 to 81, and 88 to 108; these read IVLW…LWLL, VPVG…TLAA, and PVSP…VILG. In terms of domain architecture, EamA spans 40–109; sequence LGLALACIGL…IIGGIVILGS (70 aa).

It belongs to the ArnE family. As to quaternary structure, heterodimer of ArnE and ArnF.

It is found in the cell inner membrane. Its pathway is bacterial outer membrane biogenesis; lipopolysaccharide biosynthesis. In terms of biological role, translocates 4-amino-4-deoxy-L-arabinose-phosphoundecaprenol (alpha-L-Ara4N-phosphoundecaprenol) from the cytoplasmic to the periplasmic side of the inner membrane. The chain is Probable 4-amino-4-deoxy-L-arabinose-phosphoundecaprenol flippase subunit ArnE from Shigella flexneri serotype 5b (strain 8401).